A 470-amino-acid polypeptide reads, in one-letter code: Protein escargot (470 aa).

The segment at 271–309 is disordered; that stretch reads LNLNTSQPGEQAAAKTGDMSPETMPNASAKKDKNQPPRY. 4 C2H2-type zinc fingers span residues 309–331, 344–366, 370–392, and 398–420; these read YQCPDCQKSYSTFSGLTKHQQFH, FSCKDCDKTYVSLGALKMHIRTH, CKCNLCGKAFSRPWLLQGHIRTH, and FSCQHCHRAFADRSNLRAHLQTH. A C2H2-type 5; atypical zinc finger spans residues 426 to 449; sequence YSCTSCSKTFSRMSLLTKHSEGGC. The interval 448 to 470 is disordered; that stretch reads GCPGGSAGSSSSSELNYAGYAEP.

It belongs to the snail C2H2-type zinc-finger protein family. Expression is complex and dynamic. In early embryogenesis, expression begins on the dorsal side of the embryo. Expressed in a pattern of longitudinal stripes early in germband elongation. Later in embryogenesis, expression is in cells that correspond to the wing, haltere, leg and genital imaginal disks and the abdominal histoblasts. In the embryonic leg disk, expression is restricted to imaginal cells. Also expressed in the central nervous system (CNS), tracheae and head of stage 14 embryos. CNS and tracheal expression decays during later stages, though head expression persists until late in embryogenesis. In third instar larvae, expression is seen in the brain and in regions of many imaginal tissues including the eye-antennal, wing, leg and haltere disks. Expressed in embryonic, larval and adult male germline stem cells and in the somatic cells of the embryonic gonads.

Its subcellular location is the nucleus. Transcription factor that can both stimulate and repress transcription. Binds to the consensus DNA sequence 5'-A/GCAGGTG-3'. Regulates cell motility and adhesion during tracheal morphogenesis by stimulating transcription of the DE-cadherin gene shg at branch tips, thereby promoting tracheal tube fusion. Maintains diploidy in imaginal cells by inhibiting the transcription of genes required for endoreplication. Required for development of the genital disk and acts as an intrinsic determinant of wing cell fate. The somatic protein is required for maintenance of male germ cells. Acts with other members of the snail protein family to control embryonic central nervous system development. This is Protein escargot (esg) from Drosophila melanogaster (Fruit fly).